The sequence spans 1404 residues: DNA-directed RNA polymerase subunit beta' (1404 aa).

Zn(2+)-binding residues include Cys70, Cys72, Cys85, and Cys88. Asp460, Asp462, and Asp464 together coordinate Mg(2+). Positions 814, 889, 896, and 899 each coordinate Zn(2+).

The protein belongs to the RNA polymerase beta' chain family. In terms of assembly, the RNAP catalytic core consists of 2 alpha, 1 beta, 1 beta' and 1 omega subunit. When a sigma factor is associated with the core the holoenzyme is formed, which can initiate transcription. The cofactor is Mg(2+). Zn(2+) is required as a cofactor.

The enzyme catalyses RNA(n) + a ribonucleoside 5'-triphosphate = RNA(n+1) + diphosphate. DNA-dependent RNA polymerase catalyzes the transcription of DNA into RNA using the four ribonucleoside triphosphates as substrates. The protein is DNA-directed RNA polymerase subunit beta' of Xanthomonas axonopodis pv. citri (strain 306).